Consider the following 602-residue polypeptide: MEWDKDRIRNFCIIAHIDHGKSTLADRLLEYTGALTGREMTEQVLDQMDLERERGITIKMQAVRLNYRARDGRDYQLNLIDTPGHVDFSYEVSRSLAACEGALLVVDAAQGIEAQTLANVYLALEHNLEIIPVINKIDLPSADPERVKKEIEDVIGLDASEAVLASAKSGAGVEEILERIVTRIPPPGGQTGAPLRALIFDSHYDPYKGVVCYVRVVDGSVSNGMQIKMMATGREFEVSEVGIFKPYLASVGELRTGEVGFITAGIKNVKDSRVGDTITEAGRPAPVPLPGYRKATPMVFCGLYPVEAGEYEALKDALAKLKLNDASLTYEPETSEALGFGFRCGFLGLLHMEIIQERLEREYGLNLITTAPNVVYRVKTTAGETIEIENPSKLPPPGKIEFIEEPFVRAVIMAPKDYIGPVMELCQERRGVFTNMEYISVNRVMLNYALPLSEIIYDFFDQLKSRTKGYASLDYELDGYRQSDLVKLDVLIAGEVLDALSVIVHRDKAYQRGRHLVEKLRGLIPRHLFEIPIQAAVGNRIIARETVKAIRKDVLAKCYGGDVTRKRKLLEKQKAGKKRMKQVGRVEIPQEAFMAVLSVGDK.

The tr-type G domain occupies 6 to 188 (DRIRNFCIIA…RIVTRIPPPG (183 aa)). Residues 18–23 (DHGKST) and 135–138 (NKID) contribute to the GTP site.

This sequence belongs to the TRAFAC class translation factor GTPase superfamily. Classic translation factor GTPase family. LepA subfamily.

Its subcellular location is the cell membrane. The enzyme catalyses GTP + H2O = GDP + phosphate + H(+). Its function is as follows. Required for accurate and efficient protein synthesis under certain stress conditions. May act as a fidelity factor of the translation reaction, by catalyzing a one-codon backward translocation of tRNAs on improperly translocated ribosomes. Back-translocation proceeds from a post-translocation (POST) complex to a pre-translocation (PRE) complex, thus giving elongation factor G a second chance to translocate the tRNAs correctly. Binds to ribosomes in a GTP-dependent manner. In Pelotomaculum thermopropionicum (strain DSM 13744 / JCM 10971 / SI), this protein is Elongation factor 4.